The primary structure comprises 428 residues: Nucleotidyltransferase MB21D2 (428 aa).

A disordered region spans residues 366–389 (QRRGSTTSIPSPQSDGGDPNQPDD). The span at 368-379 (RGSTTSIPSPQS) shows a compositional bias: polar residues. Residue T372 is modified to Phosphothreonine. Phosphoserine occurs at positions 373, 376, and 379.

The protein belongs to the mab-21 family.

Functionally, probable nucleotidyltransferase that catalyzes the formation of cyclic dinucleotide second messenger in response to some unknown stimulus. This chain is Nucleotidyltransferase MB21D2, found in Mus musculus (Mouse).